The following is a 193-amino-acid chain: ATP-dependent Clp protease proteolytic subunit 1 (193 aa).

Ser98 (nucleophile) is an active-site residue. His123 is an active-site residue.

It belongs to the peptidase S14 family. Fourteen ClpP subunits assemble into 2 heptameric rings which stack back to back to give a disk-like structure with a central cavity, resembling the structure of eukaryotic proteasomes.

Its subcellular location is the cytoplasm. It carries out the reaction Hydrolysis of proteins to small peptides in the presence of ATP and magnesium. alpha-casein is the usual test substrate. In the absence of ATP, only oligopeptides shorter than five residues are hydrolyzed (such as succinyl-Leu-Tyr-|-NHMec, and Leu-Tyr-Leu-|-Tyr-Trp, in which cleavage of the -Tyr-|-Leu- and -Tyr-|-Trp bonds also occurs).. Functionally, cleaves peptides in various proteins in a process that requires ATP hydrolysis. Has a chymotrypsin-like activity. Plays a major role in the degradation of misfolded proteins. This Bacillus cereus (strain ATCC 10987 / NRS 248) protein is ATP-dependent Clp protease proteolytic subunit 1.